We begin with the raw amino-acid sequence, 493 residues long: 3-octaprenyl-4-hydroxybenzoate carboxy-lyase (493 aa).

Mn(2+) is bound at residue N172. Residues I175–R177, R189–L191, and R194–G195 each bind prenylated FMN. Mn(2+) is bound at residue E238. The Proton donor role is filled by D287.

It belongs to the UbiD family. In terms of assembly, homohexamer. It depends on prenylated FMN as a cofactor. The cofactor is Mn(2+).

It localises to the cell membrane. The enzyme catalyses a 4-hydroxy-3-(all-trans-polyprenyl)benzoate + H(+) = a 2-(all-trans-polyprenyl)phenol + CO2. Its pathway is cofactor biosynthesis; ubiquinone biosynthesis. Catalyzes the decarboxylation of 3-octaprenyl-4-hydroxy benzoate to 2-octaprenylphenol, an intermediate step in ubiquinone biosynthesis. In Shewanella sp. (strain ANA-3), this protein is 3-octaprenyl-4-hydroxybenzoate carboxy-lyase.